The following is a 262-amino-acid chain: MESNLQGTFLLNNTQLAQFSEMKAPMCQYSVQNSFYKLSPPGLGPQLAAGTPHGITDILSRPVATPNSSLLSGYPHVAGFGGLSSQGVYYGPQVGSFSKAGNEYPTRTRNCWADTGQDWRGSARPCSNTPDPLSDTIHKKKHTRPTFTGHQIFALEKTFEQTKYLAGPERARLAYSLGMTESQVKVWFQNRRTKWRKKSALEPSSSTPRAPGGASGDRAASENEDDEYNKPLDPDSDDEKIRLLLRKHRAAFSVLSLGAHSV.

Residues 140 to 199 (KKHTRPTFTGHQIFALEKTFEQTKYLAGPERARLAYSLGMTESQVKVWFQNRRTKWRKKS) constitute a DNA-binding region (homeobox). The tract at residues 197–237 (KKSALEPSSSTPRAPGGASGDRAASENEDDEYNKPLDPDSD) is disordered.

As to expression, expressed in the developing CNS and gastro-intestinal tract.

Its subcellular location is the nucleus. Its function is as follows. Putative transcription factor, which may be involved in patterning of central nervous system and pancreas. This Mus musculus (Mouse) protein is Homeobox protein Nkx-6.3 (Nkx6-3).